The chain runs to 442 residues: UDP-N-acetylmuramoylalanine--D-glutamate ligase (442 aa).

Position 115–121 (115–121 (GSNGKST)) interacts with ATP.

Belongs to the MurCDEF family.

The protein resides in the cytoplasm. The catalysed reaction is UDP-N-acetyl-alpha-D-muramoyl-L-alanine + D-glutamate + ATP = UDP-N-acetyl-alpha-D-muramoyl-L-alanyl-D-glutamate + ADP + phosphate + H(+). Its pathway is cell wall biogenesis; peptidoglycan biosynthesis. Cell wall formation. Catalyzes the addition of glutamate to the nucleotide precursor UDP-N-acetylmuramoyl-L-alanine (UMA). The sequence is that of UDP-N-acetylmuramoylalanine--D-glutamate ligase from Vibrio vulnificus (strain YJ016).